The chain runs to 436 residues: GTPase Der (436 aa).

2 consecutive EngA-type G domains span residues 4-167 (PIVA…PDEA) and 175-351 (IRFS…DNHR). Residues 10–17 (GRPNVGKS), 57–61 (DTGGI), 119–122 (NKVD), 181–188 (GRPNVGKS), 229–233 (DTAGM), and 294–297 (NKWD) contribute to the GTP site. A KH-like domain is found at 352–436 (KRITSSTLND…PIKLIVRARK (85 aa)).

Belongs to the TRAFAC class TrmE-Era-EngA-EngB-Septin-like GTPase superfamily. EngA (Der) GTPase family. In terms of assembly, associates with the 50S ribosomal subunit.

Functionally, GTPase that plays an essential role in the late steps of ribosome biogenesis. This Leuconostoc mesenteroides subsp. mesenteroides (strain ATCC 8293 / DSM 20343 / BCRC 11652 / CCM 1803 / JCM 6124 / NCDO 523 / NBRC 100496 / NCIMB 8023 / NCTC 12954 / NRRL B-1118 / 37Y) protein is GTPase Der.